The sequence spans 149 residues: Large ribosomal subunit protein bL9 (149 aa).

This sequence belongs to the bacterial ribosomal protein bL9 family.

Its function is as follows. Binds to the 23S rRNA. The sequence is that of Large ribosomal subunit protein bL9 from Shewanella amazonensis (strain ATCC BAA-1098 / SB2B).